A 240-amino-acid chain; its full sequence is Lysoplasmalogenase TMEM86A (240 aa).

Residues 1–21 (MVSPVTVVKSEGPKLVPFFKA) are Cytoplasmic-facing. A helical membrane pass occupies residues 22 to 42 (TCVYFVLWLPSSSPSWVSALI). Lysine 43 is a topological domain (extracellular). The chain crosses the membrane as a helical span at residues 44-64 (CLPIFCLWLFLLAHGLGFLLT). The Cytoplasmic segment spans residues 65–70 (HPSATR). A helical transmembrane segment spans residues 71–91 (IFVGLVFSAIGDAFLIWQDQG). Residue tyrosine 92 is a topological domain, extracellular. Residues 93–113 (FVHGMLMFAVTHMLYASAFGM) traverse the membrane as a helical segment. The Cytoplasmic segment spans residues 114–115 (RP). A helical membrane pass occupies residues 116 to 136 (LGLRTGLLMVILSGLCYAFLY). Residues 137-138 (PN) are Extracellular-facing. Residues 139 to 159 (LTGAFTYVVGVYVAIIGFMGW) traverse the membrane as a helical segment. Topologically, residues 160-174 (RAMAGLQLVGAAWRW) are cytoplasmic. Residues 175–195 (TELAAGTGALLFIVSDLTIAL) traverse the membrane as a helical segment. The Extracellular segment spans residues 196 to 206 (DKFCFPVPYSR). Residues 207 to 227 (ALIMSTYYAAQMLIALSAVES) traverse the membrane as a helical segment. Residues 228 to 240 (REPVEDYRLSKAK) lie on the Cytoplasmic side of the membrane.

The protein belongs to the TMEM86 family.

Its subcellular location is the endoplasmic reticulum membrane. It carries out the reaction a 1-O-(1Z-alkenyl)-sn-glycero-3-phosphocholine + H2O = a 2,3-saturated aldehyde + sn-glycerol 3-phosphocholine. It catalyses the reaction a 1-O-(1Z-alkenyl)-sn-glycero-3-phosphoethanolamine + H2O = a 2,3-saturated aldehyde + sn-glycero-3-phosphoethanolamine. Functionally, catalyzes the hydrolysis of the vinyl ether bond of choline or ethanolamine lysoplasmalogens, forming fatty aldehyde and glycerophosphocholine or glycerophosphoethanolamine, respectively and is specific for the sn-2-deacylated (lyso) form of plasmalogen. Plays an important role in lysoplasmalogen metabolism in the adipocyte tissue and macrophages. This Bos taurus (Bovine) protein is Lysoplasmalogenase TMEM86A (TMEM86A).